The sequence spans 566 residues: Chromatin assembly factor 1 subunit B (566 aa).

6 WD repeats span residues 11–54 (HNKE…DGKA), 64–103 (RHTK…ELEP), 127–166 (GHLE…KVSI), 169–208 (EHKS…VAFN), 228–279 (FHDD…RPMG), and 351–392 (IHYH…IPLK). Disordered regions lie at residues 411 to 481 (KSQP…NQPR) and 501 to 566 (IPLK…KPNK). Polar residues-rich tracts occupy residues 425–437 (TEGT…TLQP) and 469–478 (QPASQSTKVN).

The protein belongs to the WD repeat HIR1 family. In terms of assembly, interacts with CHAF1A.

It localises to the nucleus. Functionally, acts as a component of the histone chaperone complex chromatin assembly factor 1 (CAF-1), which assembles histone octamers onto DNA during replication and repair. CAF-1 performs the first step of the nucleosome assembly process, bringing newly synthesized histones H3 and H4 to replicating DNA; histones H2A/H2B can bind to this chromatin precursor subsequent to DNA replication to complete the histone octamer. This Gallus gallus (Chicken) protein is Chromatin assembly factor 1 subunit B (CHAF1B).